Consider the following 381-residue polypeptide: Putative steryl acetyl hydrolase mug81 (381 aa).

At 1–9 (MISLSLLYR) the chain is on the cytoplasmic side. A helical; Signal-anchor for type II membrane protein transmembrane segment spans residues 10–30 (ILTLPIILVGTTILYFTIGTN). At 31–381 (FPHDELRHNL…YTFLRETFEE (351 aa)) the chain is on the lumenal side. The short motif at 125–127 (HGG) is the Involved in the stabilization of the negatively charged intermediate by the formation of the oxyanion hole element. N-linked (GlcNAc...) asparagine glycosylation occurs at asparagine 193. Serine 200 is a catalytic residue.

This sequence belongs to the 'GDXG' lipolytic enzyme family.

The protein localises to the cytoplasm. Its subcellular location is the endoplasmic reticulum membrane. Required for the deacetylation of acetylated sterols. Has a role in meiosis. In Schizosaccharomyces pombe (strain 972 / ATCC 24843) (Fission yeast), this protein is Putative steryl acetyl hydrolase mug81 (mug180).